The primary structure comprises 433 residues: ATP-dependent protease ATPase subunit HslU (433 aa).

ATP contacts are provided by residues Val18, 60–65 (GVGKTE), Asp246, Glu311, and Arg383.

The protein belongs to the ClpX chaperone family. HslU subfamily. In terms of assembly, a double ring-shaped homohexamer of HslV is capped on each side by a ring-shaped HslU homohexamer. The assembly of the HslU/HslV complex is dependent on binding of ATP.

It localises to the cytoplasm. ATPase subunit of a proteasome-like degradation complex; this subunit has chaperone activity. The binding of ATP and its subsequent hydrolysis by HslU are essential for unfolding of protein substrates subsequently hydrolyzed by HslV. HslU recognizes the N-terminal part of its protein substrates and unfolds these before they are guided to HslV for hydrolysis. The polypeptide is ATP-dependent protease ATPase subunit HslU (Rhodopseudomonas palustris (strain TIE-1)).